The following is a 152-amino-acid chain: uncharacterized protein (152 aa).

It belongs to the transposase 8 family.

This is an uncharacterized protein from Sinorhizobium fredii (strain NBRC 101917 / NGR234).